A 100-amino-acid chain; its full sequence is NADH-quinone oxidoreductase subunit K 2 (100 aa).

A run of 3 helical transmembrane segments spans residues 4–24 (LNNYLILSAILFSIGTIGVLV), 29–49 (IVIFMCVEMMLNAVNLTFIAF), and 60–80 (IFVFFVMTVAAAEAAVGLALM).

Belongs to the complex I subunit 4L family. In terms of assembly, NDH-1 is composed of 14 different subunits. Subunits NuoA, H, J, K, L, M, N constitute the membrane sector of the complex.

The protein resides in the cell inner membrane. The catalysed reaction is a quinone + NADH + 5 H(+)(in) = a quinol + NAD(+) + 4 H(+)(out). Its function is as follows. NDH-1 shuttles electrons from NADH, via FMN and iron-sulfur (Fe-S) centers, to quinones in the respiratory chain. The immediate electron acceptor for the enzyme in this species is believed to be ubiquinone. Couples the redox reaction to proton translocation (for every two electrons transferred, four hydrogen ions are translocated across the cytoplasmic membrane), and thus conserves the redox energy in a proton gradient. The sequence is that of NADH-quinone oxidoreductase subunit K 2 from Geotalea uraniireducens (strain Rf4) (Geobacter uraniireducens).